The chain runs to 148 residues: UPF0134 protein MPN_204 (148 aa).

This sequence belongs to the UPF0134 family.

This Mycoplasma pneumoniae (strain ATCC 29342 / M129 / Subtype 1) (Mycoplasmoides pneumoniae) protein is UPF0134 protein MPN_204.